A 333-amino-acid polypeptide reads, in one-letter code: Foldase protein PrsA (333 aa).

An N-terminal signal peptide occupies residues 1 to 21 (MKKRTIATGLVTLLSIVTLAA). Cys22 carries N-palmitoyl cysteine lipidation. Cys22 is lipidated: S-diacylglycerol cysteine. Positions 144-237 (KPEVTAQVIQ…PVYYIVKITK (94 aa)) constitute a PpiC domain. The segment at 296–333 (AASGSGSSGSTTTTTAASSAATTAADDQTTAAETTAAE) is disordered.

Belongs to the PrsA family.

Its subcellular location is the cell membrane. The catalysed reaction is [protein]-peptidylproline (omega=180) = [protein]-peptidylproline (omega=0). In terms of biological role, plays a major role in protein secretion by helping the post-translocational extracellular folding of several secreted proteins. The chain is Foldase protein PrsA from Streptococcus mutans serotype c (strain ATCC 700610 / UA159).